A 70-amino-acid chain; its full sequence is Conotoxin TxMMSK-02 (70 aa).

A signal peptide spans 1–20 (MMSKLGALLTICLLLFSLTA). A propeptide spanning residues 21–53 (VPLDGDQHADQPAQRLQDRIPTEDHPLFDPNKR) is cleaved from the precursor. Disulfide bonds link C54–C68, C55–C64, and C60–C67. 4-hydroxyproline is present on P66. Y69 carries the tyrosine amide modification.

It belongs to the conotoxin M superfamily. Expressed by the venom duct.

The protein localises to the secreted. The polypeptide is Conotoxin TxMMSK-02 (Conus textile (Cloth-of-gold cone)).